Reading from the N-terminus, the 220-residue chain is MTQDEMKKAAGWAALKYVEEGSIVGVGTGSTVNHFIDALATMKDDIEGAVSSSEASTQKMKALGIPVYDLNSVDRLSVYVDGADEINDRMDMIKGGGAALTREKIVAAVAEKFICIVDNTKQVNILGEFPLPVEVIPMARSYVARQLVKLGGDPVYREGVVTDNGNVILDVYNLKILNPKELESQINEIVGVVTNGLFAKRGADVLLVGTPDGVKTFTAK.

Residues 28-31, 81-84, and 94-97 each bind substrate; these read TGST, DGAD, and KGGG. Residue glutamate 103 is the Proton acceptor of the active site. Lysine 121 contacts substrate.

This sequence belongs to the ribose 5-phosphate isomerase family. Homodimer.

The catalysed reaction is aldehydo-D-ribose 5-phosphate = D-ribulose 5-phosphate. The protein operates within carbohydrate degradation; pentose phosphate pathway; D-ribose 5-phosphate from D-ribulose 5-phosphate (non-oxidative stage): step 1/1. Its function is as follows. Catalyzes the reversible conversion of ribose-5-phosphate to ribulose 5-phosphate. The chain is Ribose-5-phosphate isomerase A from Shewanella putrefaciens (strain CN-32 / ATCC BAA-453).